The following is a 203-amino-acid chain: LexA repressor (203 aa).

Residues V28–K48 constitute a DNA-binding region (H-T-H motif). Catalysis depends on for autocatalytic cleavage activity residues S122 and K159.

It belongs to the peptidase S24 family. As to quaternary structure, homodimer.

The enzyme catalyses Hydrolysis of Ala-|-Gly bond in repressor LexA.. Its function is as follows. Represses a number of genes involved in the response to DNA damage (SOS response), including recA and lexA. In the presence of single-stranded DNA, RecA interacts with LexA causing an autocatalytic cleavage which disrupts the DNA-binding part of LexA, leading to derepression of the SOS regulon and eventually DNA repair. This is LexA repressor from Desulfatibacillum aliphaticivorans.